The sequence spans 483 residues: Glutamyl-tRNA(Gln) amidotransferase subunit A (483 aa).

Residues Lys75 and Ser150 each act as charge relay system in the active site. Ser174 serves as the catalytic Acyl-ester intermediate.

It belongs to the amidase family. GatA subfamily. As to quaternary structure, heterotrimer of A, B and C subunits.

It catalyses the reaction L-glutamyl-tRNA(Gln) + L-glutamine + ATP + H2O = L-glutaminyl-tRNA(Gln) + L-glutamate + ADP + phosphate + H(+). Allows the formation of correctly charged Gln-tRNA(Gln) through the transamidation of misacylated Glu-tRNA(Gln) in organisms which lack glutaminyl-tRNA synthetase. The reaction takes place in the presence of glutamine and ATP through an activated gamma-phospho-Glu-tRNA(Gln). The sequence is that of Glutamyl-tRNA(Gln) amidotransferase subunit A from Legionella pneumophila subsp. pneumophila (strain Philadelphia 1 / ATCC 33152 / DSM 7513).